Here is a 142-residue protein sequence, read N- to C-terminus: Hemoglobin subunit alpha-A (142 aa).

Residues valine 2 to arginine 142 enclose the Globin domain. O2 is bound at residue histidine 59. Histidine 88 lines the heme b pocket.

Belongs to the globin family. In terms of assembly, heterotetramer of two alpha chains and two beta chains. As to expression, red blood cells.

Functionally, involved in oxygen transport from the lung to the various peripheral tissues. In Anseranas semipalmata (Magpie goose), this protein is Hemoglobin subunit alpha-A (HBAA).